The primary structure comprises 144 residues: MDLASLNAFIAVAETGSFSEAGERLHLTQPAVSKRIAALEQQLQVRLFDRLGREVRLTEAGRALLPRAYRILSVLEDTRRALNNLNGDVSGRLTLATSHHIGLHRLPPCCAPSPAPIRRWRWTSASSIRKWPTRRSCTAAPSWR.

The HTH lysR-type domain occupies 1-58; it reads MDLASLNAFIAVAETGSFSEAGERLHLTQPAVSKRIAALEQQLQVRLFDRLGREVRLT. The H-T-H motif DNA-binding region spans 18-38; it reads FSEAGERLHLTQPAVSKRIAA.

It belongs to the LysR transcriptional regulatory family.

This is an uncharacterized protein from Azotobacter vinelandii.